We begin with the raw amino-acid sequence, 380 residues long: DNA primase small subunit PriS (380 aa).

Active-site residues include D103, D105, and D284.

Belongs to the eukaryotic-type primase small subunit family. Heterodimer of a small subunit (PriS) and a large subunit (PriL). The cofactor is Mg(2+). Mn(2+) serves as cofactor.

Catalytic subunit of DNA primase, an RNA polymerase that catalyzes the synthesis of short RNA molecules used as primers for DNA polymerase during DNA replication. The small subunit contains the primase catalytic core and has DNA synthesis activity on its own. Binding to the large subunit stabilizes and modulates the activity, increasing the rate of DNA synthesis while decreasing the length of the DNA fragments, and conferring RNA synthesis capability. The DNA polymerase activity may enable DNA primase to also catalyze primer extension after primer synthesis. May also play a role in DNA repair. The protein is DNA primase small subunit PriS of Methanocorpusculum labreanum (strain ATCC 43576 / DSM 4855 / Z).